The primary structure comprises 120 residues: Insulin-like peptide 3 (120 aa).

The N-terminal stretch at 1-29 (MGIEMRCQDRRILLPSLLLLILMIGGVQA) is a signal peptide. 3 disulfide bridges follow: Cys-34–Cys-101, Cys-46–Cys-114, and Cys-100–Cys-105. Positions 51 to 89 (NAMTKRTLDPVNFNQIDGFEDRSLLERLLSDSSVQMLKT) are cleaved as a propeptide — connecting peptide.

The protein belongs to the insulin family. As to quaternary structure, heterodimer of a B chain and an A chain linked by two disulfide bonds. Expressed at a high level in seven cells of each larval brain hemisphere that may correspond to neurosecretory cells.

It localises to the secreted. In terms of biological role, possible ligand of InR/insulin-like receptor. The protein is Insulin-like peptide 3 of Drosophila melanogaster (Fruit fly).